We begin with the raw amino-acid sequence, 111 residues long: Nucleoid-associated protein Tmel_0542 (111 aa).

Belongs to the YbaB/EbfC family. In terms of assembly, homodimer.

Its subcellular location is the cytoplasm. It is found in the nucleoid. Binds to DNA and alters its conformation. May be involved in regulation of gene expression, nucleoid organization and DNA protection. This is Nucleoid-associated protein Tmel_0542 from Thermosipho melanesiensis (strain DSM 12029 / CIP 104789 / BI429).